The chain runs to 409 residues: 5-aminolevulinate synthase (409 aa).

Residues arginine 21, serine 137, and lysine 156 each coordinate succinyl-CoA. 3 residues coordinate pyridoxal 5'-phosphate: serine 189, histidine 217, and threonine 245. The active site involves lysine 248. The residue at position 248 (lysine 248) is an N6-(pyridoxal phosphate)lysine. Pyridoxal 5'-phosphate contacts are provided by serine 277 and threonine 278. A succinyl-CoA-binding site is contributed by threonine 365.

Belongs to the class-II pyridoxal-phosphate-dependent aminotransferase family. Homodimer. Pyridoxal 5'-phosphate serves as cofactor.

The catalysed reaction is succinyl-CoA + glycine + H(+) = 5-aminolevulinate + CO2 + CoA. It functions in the pathway porphyrin-containing compound metabolism; protoporphyrin-IX biosynthesis; 5-aminolevulinate from glycine: step 1/1. In Rhodobacter capsulatus (strain ATCC BAA-309 / NBRC 16581 / SB1003), this protein is 5-aminolevulinate synthase (hemA).